The following is a 483-amino-acid chain: Arginine/agmatine antiporter (483 aa).

Helical transmembrane passes span 11–33, 48–70, 90–112, 127–149, 156–178, 209–228, 241–263, 293–315, 335–357, 367–389, 415–435, and 458–477; these read ILGT…IFSL, LAWM…LSII, VGFT…YAVI, GGNT…YIVL, SFVN…LITA, TMLV…VISG, ILGF…GSLF, TGLL…EIPY, APSF…VYFS, ITGV…FSLS, LWLI…LLAL, and EILK…FLFS.

Belongs to the amino acid-polyamine-organocation (APC) superfamily. Basic amino acid/polyamine antiporter (APA) (TC 2.A.3.2) family.

The protein localises to the cell inner membrane. In terms of biological role, catalyzes the exchange of L-arginine for agmatine. The arginine uptake by the bacterium in the macrophage may be a virulence factor against the host innate immune response. This chain is Arginine/agmatine antiporter (aaxC), found in Chlamydia trachomatis serovar L2 (strain ATCC VR-902B / DSM 19102 / 434/Bu).